A 515-amino-acid chain; its full sequence is Maturase K (515 aa).

It belongs to the intron maturase 2 family. MatK subfamily.

It is found in the plastid. It localises to the chloroplast. Functionally, usually encoded in the trnK tRNA gene intron. Probably assists in splicing its own and other chloroplast group II introns. This chain is Maturase K, found in Pinus coulteri (Coulter pine).